The following is a 235-amino-acid chain: Large ribosomal subunit protein uL1 (235 aa).

It belongs to the universal ribosomal protein uL1 family. In terms of assembly, part of the 50S ribosomal subunit.

Its function is as follows. Binds directly to 23S rRNA. The L1 stalk is quite mobile in the ribosome, and is involved in E site tRNA release. Protein L1 is also a translational repressor protein, it controls the translation of the L11 operon by binding to its mRNA. The sequence is that of Large ribosomal subunit protein uL1 from Solidesulfovibrio magneticus (strain ATCC 700980 / DSM 13731 / RS-1) (Desulfovibrio magneticus).